Here is a 289-residue protein sequence, read N- to C-terminus: Protease HtpX homolog (289 aa).

Helical transmembrane passes span 11–31 (AALF…IAAG) and 34–54 (STTP…YGYW). Residue His-138 participates in Zn(2+) binding. Glu-139 is a catalytic residue. His-142 contacts Zn(2+). 2 consecutive transmembrane segments (helical) span residues 152-172 (SVVA…LIFG) and 182-202 (LATI…QMAI). Glu-207 contacts Zn(2+).

This sequence belongs to the peptidase M48B family. Zn(2+) serves as cofactor.

The protein resides in the cell membrane. The chain is Protease HtpX homolog from Paenarthrobacter aurescens (strain TC1).